Here is a 205-residue protein sequence, read N- to C-terminus: Thymidine kinase (205 aa).

Residues 9–16 (SAMNAGKS) and 87–90 (DESQ) contribute to the ATP site. The Proton acceptor role is filled by E88. Zn(2+) is bound by residues C145, C147, C182, and H185.

The protein belongs to the thymidine kinase family. Homotetramer.

The protein localises to the cytoplasm. It carries out the reaction thymidine + ATP = dTMP + ADP + H(+). The polypeptide is Thymidine kinase (Salmonella choleraesuis (strain SC-B67)).